A 226-amino-acid chain; its full sequence is PKHD-type hydroxylase Plav_0377 (226 aa).

The Fe2OG dioxygenase domain occupies 78–178; it reads KVLPPRFNRY…RLASFFWVQS (101 aa). H96, D98, and H159 together coordinate Fe cation. R169 lines the 2-oxoglutarate pocket.

Fe(2+) is required as a cofactor. Requires L-ascorbate as cofactor.

The protein is PKHD-type hydroxylase Plav_0377 of Parvibaculum lavamentivorans (strain DS-1 / DSM 13023 / NCIMB 13966).